We begin with the raw amino-acid sequence, 369 residues long: Phosphate acyltransferase (369 aa).

The protein belongs to the PlsX family. Homodimer. Probably interacts with PlsY.

It is found in the cytoplasm. It carries out the reaction a fatty acyl-[ACP] + phosphate = an acyl phosphate + holo-[ACP]. Its pathway is lipid metabolism; phospholipid metabolism. Catalyzes the reversible formation of acyl-phosphate (acyl-PO(4)) from acyl-[acyl-carrier-protein] (acyl-ACP). This enzyme utilizes acyl-ACP as fatty acyl donor, but not acyl-CoA. This chain is Phosphate acyltransferase, found in Gluconobacter oxydans (strain 621H) (Gluconobacter suboxydans).